The sequence spans 673 residues: Cell division cycle protein 23 homolog (673 aa).

10 TPR repeats span residues 86 to 120 (AEMW…VLDN), 159 to 195 (NKEF…YQEH), 232 to 267 (EDVW…EPRI), 332 to 365 (PMII…DPYR), 400 to 433 (WETC…NPGL), 434 to 467 (AALW…DPAD), 469 to 501 (RGWY…KPHD), 502 to 535 (SRLL…GDVE), 539 to 572 (LWSL…VTSA), and 577 to 610 (IYAI…ETLC). The disordered stretch occupies residues 628–673 (SRLPVEEAPGPSNASAAGGQEAMDTEEAPQEGGEEEMSEGEDDFSF). The segment covering 635–646 (APGPSNASAAGG) has biased composition (low complexity). A compositionally biased stretch (acidic residues) spans 650–673 (MDTEEAPQEGGEEEMSEGEDDFSF).

Belongs to the APC8/CDC23 family. The APC/C complex is probably composed of at least 12 subunits: apc-2, apc-10, apc-11, cdc-26, emb-1, emb-27, emb-30, mat-1, mat-2, mat-3, such-1 and gfi-3.

It participates in protein modification; protein ubiquitination. In terms of biological role, probable component of the anaphase promoting complex/cyclosome (APC/C), a cell cycle-regulated E3 ubiquitin ligase that controls progression through mitosis and the G1 phase of the cell cycle. The APC/C complex acts by mediating ubiquitination and subsequent degradation of target proteins. Developmental role in early embryogenesis and the metaphase to anaphase transition in oocyte and spermatocyte meiosis and mitosis in germ cells. Required for embryonic anterior-posterior axis formation. Plays a role in regulating the abundance of glr-1 receptors in postmitotic neurons, which may in turn control animal locomotion. Involved in regulating GABA neurotransmitter release at neuromuscular junctions in GABA motor neurons. The protein is Cell division cycle protein 23 homolog of Caenorhabditis elegans.